The primary structure comprises 286 residues: 2-oxoglutarate synthase subunit KorB (286 aa).

Heterotetramer of the KorA, KorB, KorC and KorD subunits.

It catalyses the reaction 2 oxidized [2Fe-2S]-[ferredoxin] + 2-oxoglutarate + CoA = succinyl-CoA + 2 reduced [2Fe-2S]-[ferredoxin] + CO2 + H(+). The chain is 2-oxoglutarate synthase subunit KorB (korB) from Methanothermobacter thermautotrophicus (strain ATCC 29096 / DSM 1053 / JCM 10044 / NBRC 100330 / Delta H) (Methanobacterium thermoautotrophicum).